The sequence spans 478 residues: MKILHICSEMYPLIKTGGLADVMGALPYAQQQSGNDVRVLIPLYPQVAEKIGETNEVATIGTFAGLVTIRFTYFNGLGVYVIDAPHLFQRSGNPYHDSGYADYPDNYKRFALLGYLGAQLSEGLDQWWGKADILHAHDWQGGLACAYLKSWNSPVKSVFTIHNIAYPGRFHSYHLHELGLPWHFFQAEGLEFYGEISYLKAGLYFADKITTVSPTYALEITEEIAGGGMHGLLQTRKAQGRLHGVLNGVDDTVWNPETDTNIVATYKPSYMQGKSKNKAELQQMFHLPEDKDAMLMVMVTRLTEQKGADFILDRIDELMEERVQLVVLGSGSPHLEYLLNEARSRHPEQIGIYIGYNEALSHQIIAGGDVILVPSRFEPCGLTQLYGLKYGTLPLVRRTGGLADTVVDSNKESIEQRTATGFVFNYPSSDDFLEAFRRAVNLWKKNKLWSSVRQNALAQDFGWARAAASYQAIYQEIV.

An ADP-alpha-D-glucose-binding site is contributed by K15.

Belongs to the glycosyltransferase 1 family. Bacterial/plant glycogen synthase subfamily.

It catalyses the reaction [(1-&gt;4)-alpha-D-glucosyl](n) + ADP-alpha-D-glucose = [(1-&gt;4)-alpha-D-glucosyl](n+1) + ADP + H(+). It participates in glycan biosynthesis; glycogen biosynthesis. Synthesizes alpha-1,4-glucan chains using ADP-glucose. This is Glycogen synthase from Actinobacillus pleuropneumoniae serotype 5b (strain L20).